A 295-amino-acid polypeptide reads, in one-letter code: Cytidine deaminase (295 aa).

2 consecutive CMP/dCMP-type deaminase domains span residues 48 to 168 (EDSD…FGPA) and 187 to 295 (DDDE…YLSL). 89–91 (NME) is a binding site for substrate. His102 provides a ligand contact to Zn(2+). Glu104 functions as the Proton donor in the catalytic mechanism. Residues Cys129 and Cys132 each coordinate Zn(2+).

Belongs to the cytidine and deoxycytidylate deaminase family. Homodimer. It depends on Zn(2+) as a cofactor.

The enzyme catalyses cytidine + H2O + H(+) = uridine + NH4(+). The catalysed reaction is 2'-deoxycytidine + H2O + H(+) = 2'-deoxyuridine + NH4(+). Its function is as follows. This enzyme scavenges exogenous and endogenous cytidine and 2'-deoxycytidine for UMP synthesis. This Vibrio cholerae serotype O1 (strain ATCC 39541 / Classical Ogawa 395 / O395) protein is Cytidine deaminase.